The chain runs to 463 residues: A-type ATP synthase subunit B (463 aa).

The protein belongs to the ATPase alpha/beta chains family. In terms of assembly, has multiple subunits with at least A(3), B(3), C, D, E, F, H, I and proteolipid K(x).

It localises to the cell membrane. In terms of biological role, component of the A-type ATP synthase that produces ATP from ADP in the presence of a proton gradient across the membrane. The B chain is a regulatory subunit. This Aeropyrum pernix (strain ATCC 700893 / DSM 11879 / JCM 9820 / NBRC 100138 / K1) protein is A-type ATP synthase subunit B.